The sequence spans 1035 residues: Cell-division control histidine kinase PdhS (1035 aa).

Positions M1–D613 are important for polar localization. The tract at residues Q500–E533 is disordered. Positions A614 to D1035 are interaction with DivK. The 72-residue stretch at H659 to V730 folds into the PAS domain. The Histidine kinase domain maps to R802–R1031. Phosphohistidine; by autocatalysis is present on H805.

As to quaternary structure, interacts with DivK.

The protein resides in the cytoplasm. The enzyme catalyses ATP + protein L-histidine = ADP + protein N-phospho-L-histidine.. Functionally, functions as a polar differentiation marker. Essential protein that, by localizing in the old pole of dividing cells, controls cell division and maturation, probably through control of DivK phosphorylation status and cellular distribution, which in turn regulates CtrA, a transcriptional regulator of the minB operon. The asymmetrical localization of this protein is probably required for cells to enter a new division cycle. This is Cell-division control histidine kinase PdhS (pdhS) from Brucella canis (strain ATCC 23365 / NCTC 10854 / RM-666).